Reading from the N-terminus, the 170-residue chain is 3-dehydroquinate dehydratase (170 aa).

Y22 functions as the Proton acceptor in the catalytic mechanism. The substrate site is built by N76, H82, and D89. H102 serves as the catalytic Proton donor. Residues 103 to 104 (LT) and R113 each bind substrate.

It belongs to the type-II 3-dehydroquinase family. In terms of assembly, homododecamer.

It carries out the reaction 3-dehydroquinate = 3-dehydroshikimate + H2O. Its pathway is metabolic intermediate biosynthesis; chorismate biosynthesis; chorismate from D-erythrose 4-phosphate and phosphoenolpyruvate: step 3/7. In terms of biological role, catalyzes a trans-dehydration via an enolate intermediate. This Helicobacter pylori (strain J99 / ATCC 700824) (Campylobacter pylori J99) protein is 3-dehydroquinate dehydratase (aroQ).